Consider the following 343-residue polypeptide: S-adenosylmethionine:tRNA ribosyltransferase-isomerase (343 aa).

Belongs to the QueA family. Monomer.

The protein localises to the cytoplasm. The enzyme catalyses 7-aminomethyl-7-carbaguanosine(34) in tRNA + S-adenosyl-L-methionine = epoxyqueuosine(34) in tRNA + adenine + L-methionine + 2 H(+). Its pathway is tRNA modification; tRNA-queuosine biosynthesis. Functionally, transfers and isomerizes the ribose moiety from AdoMet to the 7-aminomethyl group of 7-deazaguanine (preQ1-tRNA) to give epoxyqueuosine (oQ-tRNA). This chain is S-adenosylmethionine:tRNA ribosyltransferase-isomerase, found in Stenotrophomonas maltophilia (strain R551-3).